We begin with the raw amino-acid sequence, 316 residues long: Ribosomal RNA small subunit methyltransferase H (316 aa).

S-adenosyl-L-methionine contacts are provided by residues 35–37 (GGH), Asp55, Tyr79, Asp100, and Gln107.

Belongs to the methyltransferase superfamily. RsmH family.

Its subcellular location is the cytoplasm. It carries out the reaction cytidine(1402) in 16S rRNA + S-adenosyl-L-methionine = N(4)-methylcytidine(1402) in 16S rRNA + S-adenosyl-L-homocysteine + H(+). Functionally, specifically methylates the N4 position of cytidine in position 1402 (C1402) of 16S rRNA. The protein is Ribosomal RNA small subunit methyltransferase H of Nitrosospira multiformis (strain ATCC 25196 / NCIMB 11849 / C 71).